The primary structure comprises 361 residues: Protein RecA (361 aa).

Residue 77–84 coordinates ATP; the sequence is GPESSGKT.

The protein belongs to the RecA family.

The protein resides in the cytoplasm. Its function is as follows. Can catalyze the hydrolysis of ATP in the presence of single-stranded DNA, the ATP-dependent uptake of single-stranded DNA by duplex DNA, and the ATP-dependent hybridization of homologous single-stranded DNAs. It interacts with LexA causing its activation and leading to its autocatalytic cleavage. This is Protein RecA from Rhizobium rhizogenes (strain K84 / ATCC BAA-868) (Agrobacterium radiobacter).